Here is a 550-residue protein sequence, read N- to C-terminus: Integral membrane protein DGCR2/IDD (550 aa).

Positions 1 to 20 are cleaved as a signal peptide; the sequence is MVPKADSGAFLLLFLLVLTV. Over 21 to 349 the chain is Extracellular; it reads TEPLRPELRC…LFDSMASGMR (329 aa). The LDL-receptor class A domain maps to 28 to 68; it reads LRCNPGQFACRSGTIQCIPLPWQCDGWATCEDESDEANCPE. 3 cysteine pairs are disulfide-bonded: Cys30/Cys44, Cys37/Cys57, and Cys51/Cys66. The tract at residues 69–92 is disordered; it reads VTGEVRPHHGKEAVDPRQGRARGG. The span at 71–92 shows a compositional bias: basic and acidic residues; the sequence is GEVRPHHGKEAVDPRQGRARGG. A C-type lectin domain is found at 115–241; the sequence is CPTGWHHYEG…FCAQLQCFHF (127 aa). Intrachain disulfides connect Cys145–Cys265 and Cys233–Cys257. N-linked (GlcNAc...) asparagine glycosylation is found at Asn149 and Asn196. The region spanning 270–333 is the VWFC domain; sequence TCVDIKDNVV…PKECCKFMCL (64 aa). A helical transmembrane segment spans residues 350 to 368; the sequence is LVVSCISSFLILSLLLFMV. The Cytoplasmic segment spans residues 369–550; the sequence is HRLRQRRRER…HSRSSLNTVV (182 aa). The residue at position 381 (Ser381) is a Phosphoserine. The disordered stretch occupies residues 500 to 550; that stretch reads AGASLADLEDSADSSSALLVPPDPAQSGSTPAAEALPGGGRHSRSSLNTVV.

In terms of tissue distribution, predominantly expressed in brain, heart, lung and fetal kidney. Low levels in liver and adult kidney.

Its subcellular location is the membrane. In terms of biological role, putative adhesion receptor, that could be involved in cell-cell or cell-matrix interactions required for normal cell differentiation and migration. The protein is Integral membrane protein DGCR2/IDD (DGCR2) of Homo sapiens (Human).